The sequence spans 187 residues: UPF0232 protein MUL_0004 (187 aa).

Residues 1–12 show a composition bias toward gly residues; the sequence is MNGDGEQPGPGD. Disordered regions lie at residues 1 to 77 and 166 to 187; these read MNGD…QPLG and ASPSWRKGPRHIAGRGPRDTYG. Over residues 14–30 the composition is skewed to basic and acidic residues; the sequence is AARDELPSMDLVRRTLA. Residues 31-55 are compositionally biased toward low complexity; it reads EARAAARARGQDPGRGFAAGPAPRR.

This sequence belongs to the UPF0232 family.

In Mycobacterium ulcerans (strain Agy99), this protein is UPF0232 protein MUL_0004.